Consider the following 104-residue polypeptide: Vacuolar ATPase assembly integral membrane protein VMA21 (104 aa).

The Cytoplasmic segment spans residues 1-21 (MSNRVSTGKMAMAPQESVQPA). A helical membrane pass occupies residues 22–42 (VLYKLVLFALLMAVVPIGTYF). Over 43–65 (STLNYLWDGASRCGFPSGLCSTT) the chain is Lumenal. A helical membrane pass occupies residues 66–86 (FAAISAIAAANLILVGYVVVA). Residues 87-104 (FREDAASRTGPLPEKKTS) lie on the Cytoplasmic side of the membrane. Positions 101–104 (KKTS) match the Prevents secretion from ER motif.

This sequence belongs to the VMA21 family.

The protein resides in the endoplasmic reticulum membrane. It is found in the endoplasmic reticulum-Golgi intermediate compartment membrane. It localises to the cytoplasmic vesicle. Its subcellular location is the COPII-coated vesicle membrane. Required for the assembly of the V0 complex of the vacuolar ATPase (V-ATPase) in the endoplasmic reticulum. The polypeptide is Vacuolar ATPase assembly integral membrane protein VMA21 (Cryptococcus neoformans var. neoformans serotype D (strain B-3501A) (Filobasidiella neoformans)).